A 610-amino-acid polypeptide reads, in one-letter code: MCGIVGAVAQRDVAEILLEGLRRLEYRGYDSAGLAVVDSEGHVARLRRLGKVQVLSQAAEEHELHGGTGIAHTRWATHGEPSEENAHPHISEHITIVHNGIIENHEPLRELMIGRGYRFVSETDTEVVAHLVHFEQKQNGGTLVEVVKRVIPQLRGAYGMVVLDNRDSSVLVAARSGSPLVIGRGVGENFIASDQLALLPVTRRFMFLEEGDVAEITRRDVRVFDKSGQLATREEIESKVSYDAGDKGAYRHYMQKEIYEQPMAIKNTLEGRFSHGEINLSELGPKADELLAKVEHVQIIACGTSYNSGMVSRYWFEALAGIPCDVEIASEFRYRKPAVRKNSLMITLSQSGETADTLAALRLSKELGYLGSLAICNVAGSSLVRESDMALMTKAGVEIGVASTKAFTTQLTVLLMLVARVGRLRGMDAQIEHDIVHGLQALPARIEQMLSQDKLIESLAEGFSDKHHALFLGRGDQYPIAMEGALKLKEISYIHAEAYAAGELKHGPLALIDADMPVVVVAPNNELLEKLKSNIEEVRARGGELYVFADEDAGFTSSENMKIIPLPHIEEVIAPIFYTVPLQLLSYHVALIKGTDVDQPRNLAKSVTVE.

The active-site Nucleophile; for GATase activity is cysteine 2. Residues 2-219 (CGIVGAVAQR…EGDVAEITRR (218 aa)) enclose the Glutamine amidotransferase type-2 domain. 2 SIS domains span residues 287–427 (ADEL…LRGM) and 459–600 (LAEG…VDQP). The active-site For Fru-6P isomerization activity is lysine 605.

As to quaternary structure, homodimer.

The protein resides in the cytoplasm. It catalyses the reaction D-fructose 6-phosphate + L-glutamine = D-glucosamine 6-phosphate + L-glutamate. Catalyzes the first step in hexosamine metabolism, converting fructose-6P into glucosamine-6P using glutamine as a nitrogen source. The chain is Glutamine--fructose-6-phosphate aminotransferase [isomerizing] from Pectobacterium atrosepticum (strain SCRI 1043 / ATCC BAA-672) (Erwinia carotovora subsp. atroseptica).